We begin with the raw amino-acid sequence, 423 residues long: Histidine--tRNA ligase (423 aa).

It belongs to the class-II aminoacyl-tRNA synthetase family. In terms of assembly, homodimer.

The protein resides in the cytoplasm. It catalyses the reaction tRNA(His) + L-histidine + ATP = L-histidyl-tRNA(His) + AMP + diphosphate + H(+). This is Histidine--tRNA ligase from Orientia tsutsugamushi (strain Ikeda) (Rickettsia tsutsugamushi).